The primary structure comprises 392 residues: MQQICVLGSTGSIGISTLDVLASHPDKFSVYALTANSSIDLLVEQCLKFSPQYAVIRDEALYLPLKQRIESLNCTTEVLAGEQALCDVASAVQVDSVMAAIVGAAGLAPTLAAVEAGKRVLLANKESLVMSGKLFMQAAKAASALVLPIDSEHNAIFQCLPQPYTSLADAGVQKILLTGSGGPFRDTPLADLSAKTPDQACAHPNWSMGRKISVDSATMMNKGLEFIEACWLFDATPEQIEIVVHPQSIIHSMVQYVDGSVLAQMGNPDMRTPIAHCLDWPRRIDSGVASLDFFALQGLDFCRPDYQRFPALALATSAIKSGGTYPVALNAANEVAVALFLEEKIKFTDIAAIIAAVLEDWETCEPDTIAAVKEADAIARKLAYSVAAKFGY.

NADPH contacts are provided by threonine 10, glycine 11, serine 12, isoleucine 13, and asparagine 124. Residue lysine 125 coordinates 1-deoxy-D-xylulose 5-phosphate. Glutamate 126 is a binding site for NADPH. Position 150 (aspartate 150) interacts with Mn(2+). Serine 151, glutamate 152, serine 180, and histidine 203 together coordinate 1-deoxy-D-xylulose 5-phosphate. Glutamate 152 contacts Mn(2+). Glycine 209 contributes to the NADPH binding site. 1-deoxy-D-xylulose 5-phosphate is bound by residues serine 216, asparagine 221, lysine 222, and glutamate 225. Residue glutamate 225 participates in Mn(2+) binding.

It belongs to the DXR family. Mg(2+) serves as cofactor. The cofactor is Mn(2+).

The catalysed reaction is 2-C-methyl-D-erythritol 4-phosphate + NADP(+) = 1-deoxy-D-xylulose 5-phosphate + NADPH + H(+). It participates in isoprenoid biosynthesis; isopentenyl diphosphate biosynthesis via DXP pathway; isopentenyl diphosphate from 1-deoxy-D-xylulose 5-phosphate: step 1/6. Catalyzes the NADPH-dependent rearrangement and reduction of 1-deoxy-D-xylulose-5-phosphate (DXP) to 2-C-methyl-D-erythritol 4-phosphate (MEP). This Saccharophagus degradans (strain 2-40 / ATCC 43961 / DSM 17024) protein is 1-deoxy-D-xylulose 5-phosphate reductoisomerase.